Reading from the N-terminus, the 705-residue chain is MKKYLAITSKGLENLLADELVALGVTDPKLVYAGVTFEAPIEVVYRCCLWSRIASRFIQILSEFDVRDDMDLYLGASAINWPNYFTADKTLVVDFNGTNREIRNSQYGALKVKDAIVDRFTKADLERPNIDKAEPDLRVHMRLSGEKGILGFDLIGSGLHQRGYRTEAGRAPLRETLAAALVLRSTWDESKPLLDPMCGSGTLLIEAALMACEMAPGVKREKWCFEALSDFDPEVWTEIRSEARVKSRRGVKKVDTHFYGFDRDYRVIQTARDNARRAGVEDLITFDVGDATKIERPEGFENGVVICNPPYGERLSTEPALIALYSEFGRQLKEQFGGCTASIYSSNDDLLACIRMRADKQFKLNNGALPCVQKNYSISESAERKEAANIEVAPEFMNRLKKNLSKLGKWARKEKLDCYRLYDADLPDYNAAIDVYKDYIIIQEYTAPKEISEDKARRRLTDMIRATVLVTGVETNNVILKVRQKQSGKNQYQKLAEKSRYFDVEEYGVKLIVNLQDYLDTGLFLDHKLTRKMIGDMAAGKDFLNLFAYTGSATVHAACGGAKSTMTIDMSRTYLEWAQKNMNTNDQTGTQHQFLQADCLQWLQQAEGEFDLIFIDPPTFSNSKRMDQTFDVQRDHIMLLENLKRMLRQDGTVVFSNNKRNFKMDEEALDKAGLQAKNISKQTLPLDFARNKHIHNCWIITHKED.

The region spanning 43-154 is the THUMP domain; it reads VVYRCCLWSR…GEKGILGFDL (112 aa).

Belongs to the methyltransferase superfamily. RlmKL family.

The protein localises to the cytoplasm. It carries out the reaction guanosine(2445) in 23S rRNA + S-adenosyl-L-methionine = N(2)-methylguanosine(2445) in 23S rRNA + S-adenosyl-L-homocysteine + H(+). The catalysed reaction is guanosine(2069) in 23S rRNA + S-adenosyl-L-methionine = N(2)-methylguanosine(2069) in 23S rRNA + S-adenosyl-L-homocysteine + H(+). Its function is as follows. Specifically methylates the guanine in position 2445 (m2G2445) and the guanine in position 2069 (m7G2069) of 23S rRNA. The chain is Ribosomal RNA large subunit methyltransferase K/L from Aliivibrio salmonicida (strain LFI1238) (Vibrio salmonicida (strain LFI1238)).